We begin with the raw amino-acid sequence, 404 residues long: Argininosuccinate synthase (404 aa).

ATP is bound by residues 13–21 and alanine 41; that span reads AYSGGLDTS. Tyrosine 93 and serine 98 together coordinate L-citrulline. Glycine 123 contacts ATP. Residues threonine 125, asparagine 129, and aspartate 130 each contribute to the L-aspartate site. Residue asparagine 129 coordinates L-citrulline. Arginine 133, serine 182, serine 191, glutamate 267, and tyrosine 279 together coordinate L-citrulline.

Belongs to the argininosuccinate synthase family. Type 1 subfamily. In terms of assembly, homotetramer.

It is found in the cytoplasm. It catalyses the reaction L-citrulline + L-aspartate + ATP = 2-(N(omega)-L-arginino)succinate + AMP + diphosphate + H(+). It functions in the pathway amino-acid biosynthesis; L-arginine biosynthesis; L-arginine from L-ornithine and carbamoyl phosphate: step 2/3. The sequence is that of Argininosuccinate synthase from Moritella profunda.